The following is a 328-amino-acid chain: 2-oxoglutarate-dependent dioxygenase gloF (328 aa).

The region spanning 175–289 (DTSELRMNHY…RYSVAYFGKP (115 aa)) is the Fe2OG dioxygenase domain. Fe cation-binding residues include His-201, Asp-203, and His-261. Arg-280 contacts 2-oxoglutarate.

This sequence belongs to the iron/ascorbate-dependent oxidoreductase family. The cofactor is Fe(2+).

It participates in mycotoxin biosynthesis. 2-oxoglutarate-dependent dioxygenase; part of the gene cluster that mediates the biosynthesis of pneumocandins, lipohexapeptides of the echinocandin family that prevent fungal cell wall formation by non-competitive inhibition of beta-1,3-glucan synthase. The 10,12-dimethylmyristoyl side chain is synthesized by the reducing polyketide synthase gloL/GLPKS4. The thioesterase gloN/GLHYD exclusively interacts with gloL/GLPKS4 to maintain turnover of the polyketide side chain. The 10R,12S-dimethylmyristic acid is then transferred to the first thiolation domain of the nonribosomal peptide synthetase gloA/GLNRPS4 by the acyl-AMP ligase gloD/GLligase, followed by its acylation to L-ornithine to trigger elongation of the cyclic hexapeptide. L-ornithine, 4R-hydroxyl-L-proline (generated from L-proline by the dioxygenase gloF/GLOXY2), 3S-hydroxyl-L-homotyrosine (generated by gloG/GLHtyB, gloH/GLHtyA, gloI/GLHtyC, gloJ/GLHtyD and hydroxylated at C-3 by the dioxygenase gloM/GLOXY1), 3R-hydroxyl-L-glutamine (generated from L-glutamine probably by the dioxygenase gloE/GLOXY3) and 3S-hydroxyl-L-proline (generated from L-proline by the dioxygenase gloF/GLOXY2 to yield pneumocandin B0), or 3S-hydroxyl-4S-methyl-L-proline (generated from L-leucine by the dioxygenase gloC/GLOXY4 to yield pneumocandin A0) are sequentially added to the growing chain. The last C domain of gloA/GLNRPS4 is proposed to be responsible for cyclization by condensation to form the peptide bond between L-ornithine and 3S-hydroxyl-4S-methyl-L-proline (for pneumocandin A0) or 3S-hydroxyl-L-proline (for pneumocandin B0). Finally, the subsequent C-4 hydroxylation of 3S-hydroxyl-L-homotyrosine and L-ornithine dihydroxylation at C-4 and C-5 are performed by the cytochrome P450 monooxygenases gloP/GLP450-1 and gloO/GLP450-2, respectively. The sequence is that of 2-oxoglutarate-dependent dioxygenase gloF from Glarea lozoyensis (strain ATCC 20868 / MF5171).